We begin with the raw amino-acid sequence, 100 residues long: Urease subunit gamma (100 aa).

It belongs to the urease gamma subunit family. Heterotrimer of UreA (gamma), UreB (beta) and UreC (alpha) subunits. Three heterotrimers associate to form the active enzyme.

The protein resides in the cytoplasm. It carries out the reaction urea + 2 H2O + H(+) = hydrogencarbonate + 2 NH4(+). It functions in the pathway nitrogen metabolism; urea degradation; CO(2) and NH(3) from urea (urease route): step 1/1. The chain is Urease subunit gamma from Variovorax paradoxus (strain S110).